Here is a 793-residue protein sequence, read N- to C-terminus: Protein translocase subunit SecA 2 (793 aa).

Residues Gln77, 95 to 99 (GEGKT), and Asp493 contribute to the ATP site.

This sequence belongs to the SecA family. As to quaternary structure, monomer and homodimer. Part of the essential Sec protein translocation apparatus which comprises SecA, SecYEG and auxiliary proteins SecDF. Other proteins may also be involved.

The protein localises to the cell membrane. It is found in the cytoplasm. It carries out the reaction ATP + H2O + cellular proteinSide 1 = ADP + phosphate + cellular proteinSide 2.. Its function is as follows. Part of the Sec protein translocase complex. Interacts with the SecYEG preprotein conducting channel. Has a central role in coupling the hydrolysis of ATP to the transfer of proteins into and across the cell membrane, serving as an ATP-driven molecular motor driving the stepwise translocation of polypeptide chains across the membrane. In Streptococcus sanguinis (strain SK36), this protein is Protein translocase subunit SecA 2.